A 32-amino-acid polypeptide reads, in one-letter code: ilv operon leader peptide (32 aa).

The polypeptide is ilv operon leader peptide (ilvL) (Escherichia coli O157:H7).